A 253-amino-acid polypeptide reads, in one-letter code: 5-oxoprolinase subunit A (253 aa).

The protein belongs to the LamB/PxpA family. In terms of assembly, forms a complex composed of PxpA, PxpB and PxpC.

The catalysed reaction is 5-oxo-L-proline + ATP + 2 H2O = L-glutamate + ADP + phosphate + H(+). Its function is as follows. Catalyzes the cleavage of 5-oxoproline to form L-glutamate coupled to the hydrolysis of ATP to ADP and inorganic phosphate. This Chloroflexus aurantiacus (strain ATCC 29364 / DSM 637 / Y-400-fl) protein is 5-oxoprolinase subunit A.